The sequence spans 197 residues: Small ribosomal subunit protein eS1 (197 aa).

This sequence belongs to the eukaryotic ribosomal protein eS1 family.

This is Small ribosomal subunit protein eS1 from Methanoculleus marisnigri (strain ATCC 35101 / DSM 1498 / JR1).